Here is a 367-residue protein sequence, read N- to C-terminus: Succinyl-diaminopimelate desuccinylase (367 aa).

Histidine 67 lines the Zn(2+) pocket. Residue aspartate 69 is part of the active site. Aspartate 98 is a Zn(2+) binding site. The Proton acceptor role is filled by glutamate 128. Zn(2+)-binding residues include glutamate 129, glutamate 157, and histidine 342.

The protein belongs to the peptidase M20A family. DapE subfamily. In terms of assembly, homodimer. Requires Zn(2+) as cofactor. It depends on Co(2+) as a cofactor.

It carries out the reaction N-succinyl-(2S,6S)-2,6-diaminopimelate + H2O = (2S,6S)-2,6-diaminopimelate + succinate. It functions in the pathway amino-acid biosynthesis; L-lysine biosynthesis via DAP pathway; LL-2,6-diaminopimelate from (S)-tetrahydrodipicolinate (succinylase route): step 3/3. In terms of biological role, catalyzes the hydrolysis of N-succinyl-L,L-diaminopimelic acid (SDAP), forming succinate and LL-2,6-diaminopimelate (DAP), an intermediate involved in the bacterial biosynthesis of lysine and meso-diaminopimelic acid, an essential component of bacterial cell walls. In Campylobacter hominis (strain ATCC BAA-381 / DSM 21671 / CCUG 45161 / LMG 19568 / NCTC 13146 / CH001A), this protein is Succinyl-diaminopimelate desuccinylase.